Consider the following 72-residue polypeptide: Cold shock-like protein CspD (72 aa).

In terms of domain architecture, CSD spans 4-64 (GIVKWFNNAK…SDKGSHATKI (61 aa)).

Its subcellular location is the cytoplasm. This is Cold shock-like protein CspD (cspD) from Haemophilus influenzae (strain ATCC 51907 / DSM 11121 / KW20 / Rd).